The following is a 626-amino-acid chain: MLPLYLVHVLYPIGLIANLFFGSAFTIQWLLSEKRKTAYVPKAFWVLSSIGAVMMIAHGFIQSQFPMALLHGANLVIYFRNLNIASSYKLSLTTTLVILVLTLLVTTLPFALAAYYYPYMEWMASPNFFHLPLPPPNIYWHIVGCLGLFTFSSRFFIQWCYLEMNNHSTLPALFWQAGFVGGFLAFIYFIRTGDPVNILSYGCGLLPSLANLRIIYKKSRLPKFHSPSCFLSAGEPSGDTLGSDLLRNIKELNPNIHCFGVGGPLMRKEGLEPLIRMEEFQVSGFLEVFCAVFSLYKKYRKLYKAILKENPETVFCIDFPDFHFFLIRKLRKCGYRGKIIHYVCPSIWAWRPNRKKILEKHLDTLLLILPFEKEIFKDSPLKTIYLGHPLVKTIANFQDCNAWKQQLEISDQPSVALFPGSRPGDIFRNLQVQARAFRSSSLAKSHQLLVSSCNPKYDKKILELLDKEGCHNNKIVPSKFRYQLMRDCDCALAKCGTIVLEAALNQTPTIVTCLLRPFDTFLAKYIFKIFIPAYSLPNIITGSVIFPEFIGGKHDFSPEEVAAAIDILANPIGKEKQKYACQQLLKTMTENVITPKECLQAIYAQKNRFYLKNDFIKEFHPKSSRA.

Residues Met1–His225 are unknown. Residues Ser226–Ala626 form a lipid-A-disaccharide synthase region.

This sequence in the C-terminal section; belongs to the LpxB family.

It carries out the reaction a lipid X + a UDP-2-N,3-O-bis[(3R)-3-hydroxyacyl]-alpha-D-glucosamine = a lipid A disaccharide + UDP + H(+). It functions in the pathway bacterial outer membrane biogenesis; LPS lipid A biosynthesis. Its function is as follows. Condensation of UDP-2,3-diacylglucosamine and 2,3-diacylglucosamine-1-phosphate to form lipid A disaccharide, a precursor of lipid A, a phosphorylated glycolipid that anchors the lipopolysaccharide to the outer membrane of the cell. In Chlamydia caviae (strain ATCC VR-813 / DSM 19441 / 03DC25 / GPIC) (Chlamydophila caviae), this protein is Lipid-A-disaccharide synthase (lpxB).